Consider the following 371-residue polypeptide: Isopentenyl-diphosphate delta-isomerase (371 aa).

9 to 10 (RK) is a binding site for substrate. FMN is bound by residues Thr-66, 67-69 (GMT), Ser-100, and Asn-128. Substrate is bound at residue 100–102 (SQR). Gln-167 contributes to the substrate binding site. Glu-168 is a Mg(2+) binding site. Residues Lys-199, Ser-224, Thr-229, 278 to 280 (GMR), and 299 to 300 (AL) each bind FMN.

The protein belongs to the IPP isomerase type 2 family. Homooctamer. Dimer of tetramers. Requires FMN as cofactor. NADPH serves as cofactor. Mg(2+) is required as a cofactor.

Its subcellular location is the cytoplasm. It carries out the reaction isopentenyl diphosphate = dimethylallyl diphosphate. Functionally, involved in the biosynthesis of isoprenoids. Catalyzes the 1,3-allylic rearrangement of the homoallylic substrate isopentenyl (IPP) to its allylic isomer, dimethylallyl diphosphate (DMAPP). The chain is Isopentenyl-diphosphate delta-isomerase from Pyrococcus horikoshii (strain ATCC 700860 / DSM 12428 / JCM 9974 / NBRC 100139 / OT-3).